Consider the following 54-residue polypeptide: Potassium channel toxin alpha-KTx 14.1 (54 aa).

The N-terminal stretch at methionine 1–glycine 23 is a signal peptide.

It belongs to the short scorpion toxin superfamily. Potassium channel inhibitor family. Alpha-KTx 14 subfamily. In terms of processing, probably has three disulfide bridges. Expressed by the venom gland.

The protein localises to the secreted. Its function is as follows. Potential blocker of potassium channels. The protein is Potassium channel toxin alpha-KTx 14.1 of Olivierus martensii (Manchurian scorpion).